The chain runs to 434 residues: Sensor histidine kinase Hik2 (434 aa).

The GAF domain occupies 16-152 (ISLCQSQVRL…EAIAKSLAVA (137 aa)). Cysteine 19 contributes to the [3Fe-4S] cluster binding site. One can recognise a Histidine kinase domain in the interval 182-432 (DLLHQLRNPL…TFTLWLRSGE (251 aa)). Position 185 is a phosphohistidine; by autocatalysis (histidine 185). The G1 box motif lies at 357–361 (DTGYG). The short motif at 386–390 (GTGLG) is the G2 box element.

It belongs to the chloroplast sensor kinase protein family. As to quaternary structure, exists as monomers, tetramers, hexamers and other higher-order oligomers; all are able to autophosphorylate. Upon treatment with 0.5 M NaCl only tetramers are seen, which are probably inactive. Interacts with both RppA and Rre1. The cofactor is [3Fe-4S] cluster. Autophosphorylates, probably on His-185.

The protein localises to the cytoplasm. The enzyme catalyses ATP + protein L-histidine = ADP + protein N-phospho-L-histidine.. Its activity is regulated as follows. Autophosphorylation is inhibited by Na(+) but not by Cl(-). Reducing agents dithionite, duroquinol and decyl-plastoquinone, but not NADPH or ferredoxin inhibit autophosphorylation. Oxidation of the Fe-S cluster (with potassium ferricyanide) induces a conformational change that is conducive to its autophosphorylation activity. Member of possibly 2 two-component regulatory system(s) Hik2/Rre1 and Hik2/RppA. Transduces PQ (plastoquinone) redox signals to photosystem gene expression machinery during the adjustment of photosystem stoichiometry. Reduced PQ suppresses its autophosphorylation activity (i.e. kinase activity is higher under oxidizing conditions). Member of two-component regulatory system Hik2/Rre1, controls expression of sigB (sll0306), sll0528, slr1119, slr0852 and ssr3188 in response to hyperosmotic stress. Activity responds to high salt (with a linear response as concentrations rise to 0.5 M NaCl); detects Cl(-) levels. Autophosphorylates and transfers phosphate to Rre1. May transfer phosphate to RppA in a possible Hik2/RppA two-component system. The chain is Sensor histidine kinase Hik2 from Synechocystis sp. (strain ATCC 27184 / PCC 6803 / Kazusa).